Reading from the N-terminus, the 489-residue chain is Rhamnulokinase (489 aa).

Residue 13–17 (ASSGR) coordinates ATP. Cysteine 68 and cysteine 222 are disulfide-bonded. Residues glycine 83 and 236–238 (HDT) contribute to the substrate site. The Proton acceptor role is filled by aspartate 237. Threonine 259 contributes to the ATP binding site. Asparagine 296 is a binding site for substrate. Glutamine 304 serves as a coordination point for ATP. The cysteines at positions 353 and 370 are disulfide-linked. Residue glycine 402 participates in ATP binding. The cysteines at positions 413 and 417 are disulfide-linked.

It belongs to the rhamnulokinase family. As to quaternary structure, monomer. The cofactor is Mg(2+).

The catalysed reaction is L-rhamnulose + ATP = L-rhamnulose 1-phosphate + ADP + H(+). Its pathway is carbohydrate degradation; L-rhamnose degradation; glycerone phosphate from L-rhamnose: step 2/3. Involved in the catabolism of L-rhamnose (6-deoxy-L-mannose). Catalyzes the transfer of the gamma-phosphate group from ATP to the 1-hydroxyl group of L-rhamnulose to yield L-rhamnulose 1-phosphate. In Escherichia coli (strain 55989 / EAEC), this protein is Rhamnulokinase.